Consider the following 151-residue polypeptide: UPF0178 protein Caul_3070 (151 aa).

This sequence belongs to the UPF0178 family.

In Caulobacter sp. (strain K31), this protein is UPF0178 protein Caul_3070.